We begin with the raw amino-acid sequence, 411 residues long: Dual specificity protein phosphatase Mpk3 (411 aa).

The region spanning 22–149 (DSKDLILLDC…FRQAFPEWCE (128 aa)) is the Rhodanese domain. Residues 184-197 (DSACSSSAESSDCE) show a composition bias toward low complexity. The segment at 184-209 (DSACSSSAESSDCESSSHHHHHHSHH) is disordered. The 145-residue stretch at 214-358 (APVEIIPGLL…LLSFESQLRL (145 aa)) folds into the Tyrosine-protein phosphatase domain. Cysteine 302 (phosphocysteine intermediate) is an active-site residue.

Belongs to the protein-tyrosine phosphatase family. Non-receptor class dual specificity subfamily. Interacts (via N-terminal region) with phosphorylated rl. Ubiquitous expression in eye and wing imaginal disks. Enriched in ovary.

The protein resides in the cytoplasm. It carries out the reaction O-phospho-L-tyrosyl-[protein] + H2O = L-tyrosyl-[protein] + phosphate. The enzyme catalyses O-phospho-L-seryl-[protein] + H2O = L-seryl-[protein] + phosphate. It catalyses the reaction O-phospho-L-threonyl-[protein] + H2O = L-threonyl-[protein] + phosphate. Activity abolished by tyrosine phosphatase inhibitor sodium vanadate. Activated by rl. In terms of biological role, negatively regulates the activity of members of the MAP kinase family in response to changes in the cellular environment. Has a specificity for the ERK family. Acts as a negative regulator in a variety of developmental processes including cell differentiation and proliferation controlled by the Ras/ERK pathway. Suppresses the photoreceptor cell differentiation and wing vein formation. Required for proper oogenesis and early embryogenesis. Functions autonomously in a subset of photoreceptor progenitor cells in eye imaginal disks. Also appears to be required in surrounding non-neuronal cells for ommatidial patterning and photoreceptor differentiation. Plays a role in the maintenance of epithelial integrity during tracheal development. The protein is Dual specificity protein phosphatase Mpk3 (Mkp3) of Drosophila melanogaster (Fruit fly).